The primary structure comprises 135 residues: Small ribosomal subunit protein uS9 (135 aa).

The disordered stretch occupies residues 96-135 (SADNRKPLKTEGHLSRDPRAKERRKYGLKKARKAPQFSKR). Basic and acidic residues predominate over residues 97 to 115 (ADNRKPLKTEGHLSRDPRA). Residues 116 to 135 (KERRKYGLKKARKAPQFSKR) show a composition bias toward basic residues.

Belongs to the universal ribosomal protein uS9 family.

The protein is Small ribosomal subunit protein uS9 of Prochlorococcus marinus (strain MIT 9303).